Here is a 510-residue protein sequence, read N- to C-terminus: D-alanine--D-alanyl carrier protein ligase (510 aa).

157–158 is an ATP binding site; the sequence is TS. Asp-202 serves as a coordination point for D-alanine. Position 297 to 302 (297 to 302) interacts with ATP; that stretch reads NTYGPT. Residue Val-306 coordinates D-alanine. Residues Asp-389 and Lys-498 each coordinate ATP. Position 498 (Lys-498) interacts with D-alanine.

Belongs to the ATP-dependent AMP-binding enzyme family. DltA subfamily.

The protein localises to the cytoplasm. It carries out the reaction holo-[D-alanyl-carrier protein] + D-alanine + ATP = D-alanyl-[D-alanyl-carrier protein] + AMP + diphosphate. It participates in cell wall biogenesis; lipoteichoic acid biosynthesis. Its function is as follows. Catalyzes the first step in the D-alanylation of lipoteichoic acid (LTA), the activation of D-alanine and its transfer onto the D-alanyl carrier protein (Dcp) DltC. In an ATP-dependent two-step reaction, forms a high energy D-alanyl-AMP intermediate, followed by transfer of the D-alanyl residue as a thiol ester to the phosphopantheinyl prosthetic group of the Dcp. D-alanylation of LTA plays an important role in modulating the properties of the cell wall in Gram-positive bacteria, influencing the net charge of the cell wall. The sequence is that of D-alanine--D-alanyl carrier protein ligase from Listeria welshimeri serovar 6b (strain ATCC 35897 / DSM 20650 / CCUG 15529 / CIP 8149 / NCTC 11857 / SLCC 5334 / V8).